The following is a 237-amino-acid chain: Ribonuclease 3 (237 aa).

The 129-residue stretch at 7–135 folds into the RNase III domain; that stretch reads IKEVEAKLKF…ILGAVYLDGG (129 aa). A Mg(2+)-binding site is contributed by E48. D52 is an active-site residue. Mg(2+)-binding residues include N121 and E124. E124 is a catalytic residue. The DRBM domain maps to 160-229; it reads NPKNRLQQLT…AQEALDANDY (70 aa).

This sequence belongs to the ribonuclease III family. In terms of assembly, homodimer. The cofactor is Mg(2+).

Its subcellular location is the cytoplasm. The catalysed reaction is Endonucleolytic cleavage to 5'-phosphomonoester.. In terms of biological role, digests double-stranded RNA. Involved in the processing of primary rRNA transcript to yield the immediate precursors to the large and small rRNAs (23S and 16S). Processes some mRNAs, and tRNAs when they are encoded in the rRNA operon. Processes pre-crRNA and tracrRNA of type II CRISPR loci if present in the organism. The protein is Ribonuclease 3 of Chlamydia felis (strain Fe/C-56) (Chlamydophila felis).